Here is a 62-residue protein sequence, read N- to C-terminus: Potassium channel toxin kappa-KTx 3.3 (62 aa).

Positions 1 to 26 (MKSTLMTASLLILVLLSIVDYASVYA) are cleaved as a signal peptide. The propeptide occupies 27–36 (ELIDSEISME). Disulfide bonds link Cys43-Cys61 and Cys47-Cys57.

Belongs to the short scorpion toxin superfamily. Potassium channel inhibitor kappa-KTx family. Kappa-KTx 3 subfamily. Expressed by the venom gland.

The protein resides in the secreted. Functionally, potassium channel inhibitor (Kv). This chain is Potassium channel toxin kappa-KTx 3.3, found in Heterometrus petersii (Asian forest scorpion).